Consider the following 294-residue polypeptide: Phosphoribosylaminoimidazole-succinocarboxamide synthase (294 aa).

The protein belongs to the SAICAR synthetase family.

The enzyme catalyses 5-amino-1-(5-phospho-D-ribosyl)imidazole-4-carboxylate + L-aspartate + ATP = (2S)-2-[5-amino-1-(5-phospho-beta-D-ribosyl)imidazole-4-carboxamido]succinate + ADP + phosphate + 2 H(+). Its pathway is purine metabolism; IMP biosynthesis via de novo pathway; 5-amino-1-(5-phospho-D-ribosyl)imidazole-4-carboxamide from 5-amino-1-(5-phospho-D-ribosyl)imidazole-4-carboxylate: step 1/2. The chain is Phosphoribosylaminoimidazole-succinocarboxamide synthase from Rhodococcus opacus (strain B4).